A 530-amino-acid chain; its full sequence is PTS system maltose-specific EIICB component (530 aa).

The 431-residue stretch at 1–431 folds into the PTS EIIC type-1 domain; the sequence is MTAKTAPKVT…FNLKTPGRDS (431 aa). 10 helical membrane passes run 22–42, 69–89, 96–116, 138–158, 189–209, 289–309, 321–341, 343–363, 369–389, and 399–419; these read FMLPVALLSFCGIMLGIGSSL, IGSFAFSFLPVMFCIAIPLGL, VAAFAGFIGYAVMNLAVNFWL, ILGIQSIDTGILGAVIAGIIV, LVMGLVGLVIPLVWPIFAMGI, FLSQGKMPAFLGGLPGAALAM, IKGLLISGLIACVVGGTTEPL, FLFLFVAPVLYVIHALLTGLG, VLGVTIGNTDGNIIDFVVFGI, and MVPVVAAIWFVVYYVIFRFAI. The 82-residue stretch at 449 to 530 folds into the PTS EIIB type-1 domain; sequence GYNVPAILEA…MAGLMHTVQA (82 aa). Cys471 (phosphocysteine intermediate; for EIIB activity) is an active-site residue.

The protein localises to the cell inner membrane. The catalysed reaction is D-maltose(out) + N(pros)-phospho-L-histidyl-[protein] = alpha-maltose 6'-phosphate(in) + L-histidyl-[protein]. Its function is as follows. The phosphoenolpyruvate-dependent sugar phosphotransferase system (sugar PTS), a major carbohydrate active transport system, catalyzes the phosphorylation of incoming sugar substrates concomitantly with their translocation across the cell membrane. This system is involved in maltose transport. MalX can also recognize and transport glucose even though this sugar may not represent the natural substrate of the system. The polypeptide is PTS system maltose-specific EIICB component (Escherichia coli (strain K12)).